The primary structure comprises 171 residues: Ribosome maturation factor RimM (171 aa).

The region spanning 96–168 (EDGFYDHELE…TATITPPEGL (73 aa)) is the PRC barrel domain.

It belongs to the RimM family. In terms of assembly, binds ribosomal protein uS19.

It localises to the cytoplasm. An accessory protein needed during the final step in the assembly of 30S ribosomal subunit, possibly for assembly of the head region. Essential for efficient processing of 16S rRNA. May be needed both before and after RbfA during the maturation of 16S rRNA. It has affinity for free ribosomal 30S subunits but not for 70S ribosomes. This Corynebacterium glutamicum (strain ATCC 13032 / DSM 20300 / JCM 1318 / BCRC 11384 / CCUG 27702 / LMG 3730 / NBRC 12168 / NCIMB 10025 / NRRL B-2784 / 534) protein is Ribosome maturation factor RimM.